A 611-amino-acid chain; its full sequence is MNLEEMKERQKHIRNFSIVAHIDHGKSTLADRILEMTDSISKREMKNQILDDMPLERERGITIKLNAVALTYHAKDGEDYIFHLIDTPGHVDFSYEVSRSLAACEGAVLVVDATQGVEAQTLANVFLALDNDLEILPVINKIDLPSADPEGTKKQIEDEIGLDPDEAVDISAKTGMGVDEVLEKIVKDVPAPTGDLTAPLKALIFDSKYDDYRGVVLSVRVVEGTVKKGDRIKLMNGGTEYEVAEVGINSPKPLARDVLMAGDVGYITAAIKDIKDTRVGDTVTSADNPTDKPLEGYRQMTPMVYAGLYPTDNAKFNDLRDALEKLQLNDAALTFEPESSQALGFGFRCGFLGLLHMDVIQERLEREFNLDLITTAPSVTYHVELADGTTKEVENPAEMPDASSIKAIKEPYVRASIMVPNDYVGPVMELCQRKRGDFDTMEYLSDTRVNVIYHIPLSEIIFDFFDKLKSSTRGYASLDYEIDGYRPSNLVKIDILLNGDKVDALSFIAHRDFAAERGREITAKLKKIIPRQNFEIPIQAAIGSKIIARTNIKAYRKDVTARIHTGDPDRRAKLLDKQKRGKKRMKAVGKVDIPQAAFMAVLKTDEQLDEK.

A tr-type G domain is found at 11–193 (KHIRNFSIVA…KIVKDVPAPT (183 aa)). GTP is bound by residues 23–28 (DHGKST) and 140–143 (NKID).

The protein belongs to the TRAFAC class translation factor GTPase superfamily. Classic translation factor GTPase family. LepA subfamily.

It localises to the cell membrane. It catalyses the reaction GTP + H2O = GDP + phosphate + H(+). Its function is as follows. Required for accurate and efficient protein synthesis under certain stress conditions. May act as a fidelity factor of the translation reaction, by catalyzing a one-codon backward translocation of tRNAs on improperly translocated ribosomes. Back-translocation proceeds from a post-translocation (POST) complex to a pre-translocation (PRE) complex, thus giving elongation factor G a second chance to translocate the tRNAs correctly. Binds to ribosomes in a GTP-dependent manner. This is Elongation factor 4 from Limosilactobacillus reuteri (strain DSM 20016) (Lactobacillus reuteri).